The following is a 104-amino-acid chain: Large ribosomal subunit protein bL21 (104 aa).

This sequence belongs to the bacterial ribosomal protein bL21 family. As to quaternary structure, part of the 50S ribosomal subunit. Contacts protein L20.

In terms of biological role, this protein binds to 23S rRNA in the presence of protein L20. The polypeptide is Large ribosomal subunit protein bL21 (Lactococcus lactis subsp. cremoris (strain MG1363)).